The chain runs to 332 residues: RNA polymerase principal sigma factor HrdD (332 aa).

The span at 1 to 11 (MATRAVARRKS) shows a compositional bias: basic residues. The segment at 1 to 25 (MATRAVARRKSAAGETSGSATSVRA) is disordered. Positions 13-22 (AGETSGSATS) are enriched in low complexity. A Polymerase core binding motif is present at residues 124–137 (DLIQEGNAGLVRAV). The segment at residues 294–313 (LTEVGKEHGLTRERIRQIEK) is a DNA-binding region (H-T-H motif).

It belongs to the sigma-70 factor family. Interacts transiently with the RNA polymerase catalytic core.

In terms of biological role, sigma factors are initiation factors that promote the attachment of RNA polymerase to specific initiation sites and are then released. This Streptomyces coelicolor (strain ATCC BAA-471 / A3(2) / M145) protein is RNA polymerase principal sigma factor HrdD (hrdD).